A 331-amino-acid polypeptide reads, in one-letter code: Small ribosomal subunit protein uS2 (331 aa).

It belongs to the universal ribosomal protein uS2 family.

The polypeptide is Small ribosomal subunit protein uS2 (Rhodopseudomonas palustris (strain ATCC BAA-98 / CGA009)).